The sequence spans 250 residues: Uracil-DNA glycosylase (250 aa).

D78 (proton acceptor) is an active-site residue.

The protein belongs to the uracil-DNA glycosylase (UDG) superfamily. UNG family.

The protein localises to the cytoplasm. The enzyme catalyses Hydrolyzes single-stranded DNA or mismatched double-stranded DNA and polynucleotides, releasing free uracil.. Excises uracil residues from the DNA which can arise as a result of misincorporation of dUMP residues by DNA polymerase or due to deamination of cytosine. The polypeptide is Uracil-DNA glycosylase (Albidiferax ferrireducens (strain ATCC BAA-621 / DSM 15236 / T118) (Rhodoferax ferrireducens)).